A 234-amino-acid polypeptide reads, in one-letter code: Zinc finger BED domain-containing protein 3 (234 aa).

Positions 19–42 (AAARGGQCPGLGPAPTPTPPGRLG) are disordered. The BED-type zinc finger occupies 43–104 (APYSEAWGYF…SAHRRELESS (62 aa)). C69, C72, H92, and H97 together coordinate Zn(2+). Disordered stretches follow at residues 94–126 (RSAHRRELESSGAGSSPPAAPCPPPPGPAAAPE) and 202–225 (REGALGWAPAAPPPLKDDPEGDRD). Positions 111–122 (PAAPCPPPPGPA) are enriched in pro residues. Over residues 216–225 (LKDDPEGDRD) the composition is skewed to basic and acidic residues.

Associates with the subcortical maternal complex (SCMC) composed of at least NLRP5, KHDC3L, OOEP, and TLE6 via interaction with NLRP5 and TLE6. Interacts with AXIN1; the interaction is direct, enhanced by protein kinase GSK3B and casein kinase CSNK1E activities and decreases GSK3B-induced beta-catenin serine and threonine phosphorylations. Secreted in blood plasma, and expressed in skeletal muscle and adipose tissue (at protein level).

The protein resides in the cytoplasm. It is found in the membrane. It localises to the secreted. Acts as a positive regulator in the activation of the canonical Wnt/beta-catenin signaling pathway by stabilizing cytoplasmic beta-catenin. Involved in transcription activation of Wnt target gene expression. Plays a role in symmetric division of blastomeres in the early stages of embryogenesis via regulation of mitotic spindle central positioning and organization of the F-actin filament network. Plays a role in regulating the distribution of cellular organelles, via modulation of cytoskeletal dynamics and cytoplasmic lattice formation. In Homo sapiens (Human), this protein is Zinc finger BED domain-containing protein 3 (ZBED3).